The chain runs to 343 residues: Putative KilA-N domain-containing protein R904 (343 aa).

The 107-residue stretch at Glu-51–Tyr-157 folds into the KilA-N domain. Positions Ala-159–Tyr-279 form a coiled coil.

This Acanthamoeba polyphaga mimivirus (APMV) protein is Putative KilA-N domain-containing protein R904.